The primary structure comprises 124 residues: uncharacterized protein (124 aa).

3 helical membrane passes run 13–33 (LIQI…VLQL), 43–63 (GLFW…PEFF), and 71–91 (GVGR…FYLI).

It to M.thermoautotrophicum MTH137.

It is found in the cell membrane. This is an uncharacterized protein from Methanocaldococcus jannaschii (strain ATCC 43067 / DSM 2661 / JAL-1 / JCM 10045 / NBRC 100440) (Methanococcus jannaschii).